The primary structure comprises 512 residues: Retinaldehyde dehydrogenase 3 (512 aa).

The tract at residues 1-23 is disordered; that stretch reads MATANGAVENGQPDGKPPALPRP. A2 is subject to N-acetylalanine. Residues K204, E207, and 257–262 each bind NAD(+); that span reads GSTEVG. E280 acts as the Proton acceptor in catalysis. C314 (nucleophile) is an active-site residue. Positions 361 and 411 each coordinate NAD(+).

It belongs to the aldehyde dehydrogenase family. In terms of assembly, homotetramer.

The protein resides in the cytoplasm. The catalysed reaction is all-trans-retinal + NAD(+) + H2O = all-trans-retinoate + NADH + 2 H(+). The enzyme catalyses retinal + NAD(+) + H2O = retinoate + NADH + 2 H(+). It catalyses the reaction all-trans-13,14-dihydroretinal + NAD(+) + H2O = all-trans-13,14-dihydroretinoate + NADH + 2 H(+). Its pathway is cofactor metabolism; retinol metabolism. Functionally, catalyzes the NAD-dependent oxidation of aldehyde substrates, such as all-trans-retinal and all-trans-13,14-dihydroretinal, to their corresponding carboxylic acids, all-trans-retinoate and all-trans-13,14-dihydroretinoate, respectively. High specificity for all-trans-retinal as substrate, can also accept acetaldehyde as substrate in vitro but with lower affinity. Required for the biosynthesis of normal levels of retinoate in the embryonic ocular and nasal regions; a critical lipid in the embryonic development of the eye and the nasal region. The chain is Retinaldehyde dehydrogenase 3 (Aldh1a3) from Rattus norvegicus (Rat).